We begin with the raw amino-acid sequence, 1419 residues long: L-2-aminoadipate reductase (1419 aa).

The Carrier domain maps to 880–956 (ETLTATERDI…GLAKEIERMK (77 aa)). O-(pantetheine 4'-phosphoryl)serine is present on Ser-916.

This sequence belongs to the ATP-dependent AMP-binding enzyme family. It depends on pantetheine 4'-phosphate as a cofactor.

The protein resides in the cytoplasm. It carries out the reaction (S)-2-amino-6-oxohexanoate + NADP(+) + H2O = L-2-aminoadipate + NADPH + 2 H(+). The enzyme catalyses (S)-2-amino-6-oxohexanoate + NAD(+) + H2O = L-2-aminoadipate + NADH + 2 H(+). The catalysed reaction is (S)-2-amino-6-oxohexanoate + AMP + diphosphate + NADP(+) = L-2-aminoadipate + ATP + NADPH + H(+). It functions in the pathway amino-acid biosynthesis; L-lysine biosynthesis via AAA pathway; L-lysine from L-alpha-aminoadipate (fungal route): step 1/3. Its function is as follows. Catalyzes the activation of alpha-aminoadipate by ATP-dependent adenylation and the reduction of activated alpha-aminoadipate by NADPH. The activated alpha-aminoadipate is bound to the phosphopantheinyl group of the enzyme itself before it is reduced to (S)-2-amino-6-oxohexanoate. This chain is L-2-aminoadipate reductase (lys1), found in Schizosaccharomyces pombe (strain 972 / ATCC 24843) (Fission yeast).